We begin with the raw amino-acid sequence, 408 residues long: Solute carrier family 35 member F1 (408 aa).

Residues 1-21 (MIPPEQPQQQLQPPSPAPPNH) are disordered. 10 consecutive transmembrane segments (helical) span residues 60–80 (MLIS…IGLT), 94–114 (VFQS…TLAV), 129–147 (WWKY…YLVV), 158–178 (IQLL…FFLL), 186–206 (FIGI…DVLV), 221–241 (LLVL…EYII), 247–267 (VEFL…QLAI), 284–304 (LLYV…PVVI), 311–331 (SVNL…LFLF), and 335–355 (FSGL…LYSS).

Belongs to the SLC35F solute transporter family.

It localises to the cytoplasmic vesicle. The protein localises to the secretory vesicle. Its subcellular location is the synaptic vesicle membrane. Its function is as follows. Putative solute transporter. The protein is Solute carrier family 35 member F1 (SLC35F1) of Homo sapiens (Human).